Reading from the N-terminus, the 112-residue chain is Citrate synthase (112 aa).

Residues His-39 and Asp-97 contribute to the active site.

This sequence belongs to the citrate synthase family.

It catalyses the reaction oxaloacetate + acetyl-CoA + H2O = citrate + CoA + H(+). It participates in carbohydrate metabolism; tricarboxylic acid cycle; isocitrate from oxaloacetate: step 1/2. The polypeptide is Citrate synthase (gltA) (Bartonella vinsonii subsp. berkhoffii).